A 652-amino-acid polypeptide reads, in one-letter code: DNA ligase (652 aa).

Residues 29–33 (DSDYD), 78–79 (SL), and E107 contribute to the NAD(+) site. The N6-AMP-lysine intermediate role is filled by K109. NAD(+) is bound by residues R130, E164, K278, and K302. Residues C395, C398, C413, and C418 each contribute to the Zn(2+) site. Residues 577–652 (NSDAALFGLT…IEDEDWLRQL (76 aa)) enclose the BRCT domain.

This sequence belongs to the NAD-dependent DNA ligase family. LigA subfamily. It depends on Mg(2+) as a cofactor. Mn(2+) serves as cofactor.

It carries out the reaction NAD(+) + (deoxyribonucleotide)n-3'-hydroxyl + 5'-phospho-(deoxyribonucleotide)m = (deoxyribonucleotide)n+m + AMP + beta-nicotinamide D-nucleotide.. In terms of biological role, DNA ligase that catalyzes the formation of phosphodiester linkages between 5'-phosphoryl and 3'-hydroxyl groups in double-stranded DNA using NAD as a coenzyme and as the energy source for the reaction. It is essential for DNA replication and repair of damaged DNA. The protein is DNA ligase of Streptococcus pyogenes serotype M49 (strain NZ131).